Consider the following 167-residue polypeptide: Endoribonuclease YbeY (167 aa).

Zn(2+) is bound by residues H131, H135, and H141.

The protein belongs to the endoribonuclease YbeY family. It depends on Zn(2+) as a cofactor.

It localises to the cytoplasm. In terms of biological role, single strand-specific metallo-endoribonuclease involved in late-stage 70S ribosome quality control and in maturation of the 3' terminus of the 16S rRNA. In Rickettsia rickettsii (strain Iowa), this protein is Endoribonuclease YbeY.